The following is a 115-amino-acid chain: NADH-ubiquinone oxidoreductase chain 3 (115 aa).

3 consecutive transmembrane segments (helical) span residues 1–21 (MITL…LLII), 55–75 (FFLV…LFPL), and 87–107 (AIIL…YEWL).

The protein belongs to the complex I subunit 3 family.

The protein resides in the mitochondrion membrane. The catalysed reaction is a ubiquinone + NADH + 5 H(+)(in) = a ubiquinol + NAD(+) + 4 H(+)(out). In terms of biological role, core subunit of the mitochondrial membrane respiratory chain NADH dehydrogenase (Complex I) that is believed to belong to the minimal assembly required for catalysis. Complex I functions in the transfer of electrons from NADH to the respiratory chain. The immediate electron acceptor for the enzyme is believed to be ubiquinone. This Myxine glutinosa (Atlantic hagfish) protein is NADH-ubiquinone oxidoreductase chain 3 (MT-ND3).